Consider the following 133-residue polypeptide: Large ribosomal subunit protein bL17 (133 aa).

The protein belongs to the bacterial ribosomal protein bL17 family. In terms of assembly, part of the 50S ribosomal subunit. Contacts protein L32.

The protein is Large ribosomal subunit protein bL17 of Nitratidesulfovibrio vulgaris (strain ATCC 29579 / DSM 644 / CCUG 34227 / NCIMB 8303 / VKM B-1760 / Hildenborough) (Desulfovibrio vulgaris).